The primary structure comprises 305 residues: Homoserine kinase (305 aa).

Residue 90–100 (PLARGLGSSAS) coordinates ATP.

This sequence belongs to the GHMP kinase family. Homoserine kinase subfamily.

Its subcellular location is the cytoplasm. It catalyses the reaction L-homoserine + ATP = O-phospho-L-homoserine + ADP + H(+). It functions in the pathway amino-acid biosynthesis; L-threonine biosynthesis; L-threonine from L-aspartate: step 4/5. Functionally, catalyzes the ATP-dependent phosphorylation of L-homoserine to L-homoserine phosphate. In Staphylococcus haemolyticus (strain JCSC1435), this protein is Homoserine kinase.